A 303-amino-acid chain; its full sequence is Plasmodesmata-located protein 1 (303 aa).

Residues 1–21 (MKLTYQFFIFWFFLPFFAISG) form the signal peptide. Over 22-268 (DDDYKNLIFK…GEKRQHTERT (247 aa)) the chain is Extracellular. 2 consecutive Gnk2-homologous domains span residues 27–136 (NLIF…SSGF) and 141–248 (GTEM…YYSH). Intrachain disulfides connect C33–C108, C84–C93, C96–C127, C149–C226, C202–C211, and C214–C239. A helical transmembrane segment spans residues 269–289 (IALAVGGVFVLGFVIVCLLVL). The necessary and sufficient for plasmodesmal targeting stretch occupies residues 269-289 (IALAVGGVFVLGFVIVCLLVL). Residues 290–303 (RSAMKKKSNKYDAY) are Cytoplasmic-facing.

It belongs to the cysteine-rich repeat secretory protein family. Plasmodesmata-located proteins (PDLD) subfamily. Interacts with AZI1. Interacts with PDLP5. Does not interact with DIR1. In terms of assembly, (Microbial infection) Interacts with Grapevine fanleaf virus (GFLV) 2B-MP. Interacts with Cauliflower mosaic virus (CaMV) movement protein. As to expression, highly expressed in cell suspension. Expressed in epidermal and spongy mesophyll cells, and the cell wall interface at the base of the leaf trichome (at protein level). Expressed in haustoria-containing cells.

Its subcellular location is the cell membrane. The protein localises to the cell junction. The protein resides in the plasmodesma. Modulates cell-to-cell trafficking. Required for systemic acquired resistance (SAR) which is mediated by the signaling molecules azelaic acid (AzA), glycerol-3-phosphate (G3P), and salicylic acid (SA). Required for the proper localization and stability of AZI1 which is involved in SAR. Mediates callose deposition during downy mildew fungal infection around haustoria. Haustoria are unicellular protrusions from hyphae and function as the site of molecular exchange of nutrients and effectors between host and pathogen. The protein is Plasmodesmata-located protein 1 of Arabidopsis thaliana (Mouse-ear cress).